Here is a 354-residue protein sequence, read N- to C-terminus: S-adenosylmethionine:tRNA ribosyltransferase-isomerase (354 aa).

Belongs to the QueA family. In terms of assembly, monomer.

The protein localises to the cytoplasm. It carries out the reaction 7-aminomethyl-7-carbaguanosine(34) in tRNA + S-adenosyl-L-methionine = epoxyqueuosine(34) in tRNA + adenine + L-methionine + 2 H(+). The protein operates within tRNA modification; tRNA-queuosine biosynthesis. Functionally, transfers and isomerizes the ribose moiety from AdoMet to the 7-aminomethyl group of 7-deazaguanine (preQ1-tRNA) to give epoxyqueuosine (oQ-tRNA). The protein is S-adenosylmethionine:tRNA ribosyltransferase-isomerase of Azorhizobium caulinodans (strain ATCC 43989 / DSM 5975 / JCM 20966 / LMG 6465 / NBRC 14845 / NCIMB 13405 / ORS 571).